A 445-amino-acid polypeptide reads, in one-letter code: Probable glycine dehydrogenase (decarboxylating) subunit 1 (445 aa).

The protein belongs to the GcvP family. N-terminal subunit subfamily. In terms of assembly, the glycine cleavage system is composed of four proteins: P, T, L and H. In this organism, the P 'protein' is a heterodimer of two subunits.

The enzyme catalyses N(6)-[(R)-lipoyl]-L-lysyl-[glycine-cleavage complex H protein] + glycine + H(+) = N(6)-[(R)-S(8)-aminomethyldihydrolipoyl]-L-lysyl-[glycine-cleavage complex H protein] + CO2. Its function is as follows. The glycine cleavage system catalyzes the degradation of glycine. The P protein binds the alpha-amino group of glycine through its pyridoxal phosphate cofactor; CO(2) is released and the remaining methylamine moiety is then transferred to the lipoamide cofactor of the H protein. In Anaeromyxobacter sp. (strain Fw109-5), this protein is Probable glycine dehydrogenase (decarboxylating) subunit 1.